Here is a 410-residue protein sequence, read N- to C-terminus: Elongation factor Tu (410 aa).

Residues 10–214 enclose the tr-type G domain; it reads KPHVNIGTIG…EVDAYIPTPE (205 aa). A G1 region spans residues 19–26; it reads GHVDHGKT. 19–26 lines the GTP pocket; the sequence is GHVDHGKT. Position 26 (T26) interacts with Mg(2+). The interval 60–64 is G2; sequence GITIN. The G3 stretch occupies residues 81 to 84; the sequence is DCPG. GTP contacts are provided by residues 81–85 and 136–139; these read DCPGH and NKED. The segment at 136-139 is G4; it reads NKED. A G5 region spans residues 174-176; sequence SAL.

The protein belongs to the TRAFAC class translation factor GTPase superfamily. Classic translation factor GTPase family. EF-Tu/EF-1A subfamily. Monomer.

Its subcellular location is the cytoplasm. It catalyses the reaction GTP + H2O = GDP + phosphate + H(+). Its function is as follows. GTP hydrolase that promotes the GTP-dependent binding of aminoacyl-tRNA to the A-site of ribosomes during protein biosynthesis. The sequence is that of Elongation factor Tu from Gloeothece citriformis (strain PCC 7424) (Cyanothece sp. (strain PCC 7424)).